Consider the following 318-residue polypeptide: GTP cyclohydrolase MptA (318 aa).

The protein belongs to the GTP cyclohydrolase IV family. Homodimer. Fe(2+) serves as cofactor.

It catalyses the reaction GTP + H2O = 7,8-dihydroneopterin 2',3'-cyclic phosphate + formate + diphosphate + H(+). The protein operates within cofactor biosynthesis; 5,6,7,8-tetrahydromethanopterin biosynthesis. Its function is as follows. Converts GTP to 7,8-dihydro-D-neopterin 2',3'-cyclic phosphate, the first intermediate in the biosynthesis of coenzyme methanopterin. The polypeptide is GTP cyclohydrolase MptA (Methanosarcina mazei (strain ATCC BAA-159 / DSM 3647 / Goe1 / Go1 / JCM 11833 / OCM 88) (Methanosarcina frisia)).